Reading from the N-terminus, the 442-residue chain is Protein bag of marbles (442 aa).

The required for interaction with ubiquitin stretch occupies residues 201–250; it reads FDMPVKSTMPKSLNVRYQLQVLCTKVERFLVQQRRTLEANRHFDFEKYDE. Positions 408–442 are disordered; it reads VSMEQPSASEEEFEETEEVPSSPPRHTGRVPRFRS. Residues 416–425 show a composition bias toward acidic residues; the sequence is SEEEFEETEE. A compositionally biased stretch (basic residues) spans 433–442; that stretch reads HTGRVPRFRS.

As to quaternary structure, interacts (via central region) with ubiquitin. Interacts (via C-terminus) with otu (via OTU domain); the interaction enhances otu aggregation into amyloid-like structures and enhances its deubiquitinase activity. Together with otu interacts with CycA/cyclin-A (via C-terminus); the interaction stabilizes CycA by promoting and enhancing otu dependent deubiquitination of CycA. Together with otu interacts with Traf6. Part of a complex composed of at least tut, bam and bgcn; complex formation does not require RNA. Interacts (via C-terminus) with bgcn; the interaction is direct and is not disrupted by eIF4A. Interacts with eIF4A (via multiple contacts); the interaction is direct and is not disrupted by bgcn. Interacts (via N-terminus) with tut; the interaction is direct and mediates the interaction between tut and bgcn. As part of the bam-bgcn-tut complex associates with twin; may recruit the CCR4-NOT1 deadenylation complex to mRNA 3'-UTRs to mediate post-transcriptional regulation of expression. Part of a complex composed of at least mei-P26, bam, bgcn and Sxl; this complex is involved in translational repression of nanos mRNA. Post-translationally, ubiquitinated (C-terminal region). In terms of tissue distribution, in cystoblasts and/or very early cystocytes in testis (at protein level); expression levels are regulated by mei-P26. In cystoblasts and/or very early cystocytes in ovary. Expressed in the gut; expression levels increase with age.

Its subcellular location is the cytoplasm. Functionally, regulatory component of a deubiquitinase complex consisting of bam and otu. The complex deubiquitinates K63-linked polyubiquitinated proteins, antagonizing the ubiquitination activity of Traf6 and regulating the IMD immune signaling pathway. Otu-bam deubiquitinase activity is regulated by Traf6 dependent immune signaling regulation of bam expression levels; this forms a feedback loop that regulates the IMD immune signaling pathway and balances gut immune activity during aging. The complex deubiquitinates and stabilizes CycA/cyclin-A to regulate CycA-dependent differentiation. Required to initiate both male and female gametogenesis. Part of a complex with bgcn involved in 3'-UTR-dependent translational repression of a subset of mRNAs, including those for mei-P26, nanos and shg/E-cadherin. Repression of mei-P26 is targeted by let-7 miRNA. Involved in a regulatory cascade with mei-P26 to control the progression of cystocytes through transit amplification and the switch to spermatocyte differentiation; mei-P26 facilitates bam accumulation, which in turn represses translation of mei-P26. Forms a complex with tut and bgcn involved in 3'-UTR-dependent post-transcriptional repression of several 3'-RNA processing factors, which promotes germline stem cell lineage differentiation and mitosis-to-meiosis transition. This is Protein bag of marbles from Drosophila melanogaster (Fruit fly).